The chain runs to 192 residues: NF-kappa-B inhibitor-interacting Ras-like protein 1 (192 aa).

11–18 (GLLSVGKT) lines the GTP pocket. Positions 35-43 (DCETMEDVY) match the Effector region motif. Residues 58-93 (HLYDTRGLQEGVELPKHYFSFADGFVLVYSVNNLES) form an interactions with NFKBIA and NFKBIB region. GTP is bound by residues 61 to 65 (DTRGL) and 120 to 123 (NKID). A disordered region spans residues 168 to 192 (LSQPQSKSSFPLPGRKNKGNSSSEN).

This sequence belongs to the small GTPase superfamily. Ras family. KappaB-Ras subfamily. Interacts with both NF-kappa-B inhibitor alpha (NFKBIA) and beta (NFKBIB) in vitro. However, it probably only interacts with NFKBIB in vivo. Forms a complex with NFKBIB and NF-kappa-B heterodimer (p50/NFKB1 and p65/RELA). Also interacts with c-Rel (REL).

It is found in the cytoplasm. In terms of biological role, atypical Ras-like protein that acts as a potent regulator of NF-kappa-B activity by preventing the degradation of NF-kappa-B inhibitor beta (NFKBIB) by most signals, explaining why NFKBIB is more resistant to degradation. May act by blocking phosphorylation of NFKBIB and mediating cytoplasmic retention of p65/RELA NF-kappa-B subunit. It is unclear whether it acts as a GTPase. Both GTP- and GDP-bound forms block phosphorylation of NFKBIB. The chain is NF-kappa-B inhibitor-interacting Ras-like protein 1 (NKIRAS1) from Macaca fascicularis (Crab-eating macaque).